The primary structure comprises 162 residues: Cyclic pyranopterin monophosphate synthase (162 aa).

Substrate contacts are provided by residues Met-75 to His-77 and Met-115 to Glu-116. Residue Asp-130 is part of the active site.

This sequence belongs to the MoaC family. In terms of assembly, homohexamer; trimer of dimers.

It carries out the reaction (8S)-3',8-cyclo-7,8-dihydroguanosine 5'-triphosphate = cyclic pyranopterin phosphate + diphosphate. Its pathway is cofactor biosynthesis; molybdopterin biosynthesis. Its function is as follows. Catalyzes the conversion of (8S)-3',8-cyclo-7,8-dihydroguanosine 5'-triphosphate to cyclic pyranopterin monophosphate (cPMP). In Geobacillus thermodenitrificans (strain NG80-2), this protein is Cyclic pyranopterin monophosphate synthase.